An 846-amino-acid polypeptide reads, in one-letter code: Translation initiation factor IF-2 (846 aa).

The disordered stretch occupies residues 199 to 219 (KREEEEKKSKAKKAGGKGFKK). Residues 207-219 (SKAKKAGGKGFKK) show a composition bias toward basic residues. One can recognise a tr-type G domain in the interval 345–512 (SRAPVVTIMG…AVLLQSEVLE (168 aa)). The interval 354 to 361 (GHVDHGKT) is G1. 354-361 (GHVDHGKT) serves as a coordination point for GTP. The G2 stretch occupies residues 379–383 (GITQH). The segment at 400–403 (DTPG) is G3. Residues 400-404 (DTPGH) and 454-457 (NKID) contribute to the GTP site. A G4 region spans residues 454–457 (NKID). A G5 region spans residues 490–492 (SAK).

It belongs to the TRAFAC class translation factor GTPase superfamily. Classic translation factor GTPase family. IF-2 subfamily.

The protein resides in the cytoplasm. In terms of biological role, one of the essential components for the initiation of protein synthesis. Protects formylmethionyl-tRNA from spontaneous hydrolysis and promotes its binding to the 30S ribosomal subunits. Also involved in the hydrolysis of GTP during the formation of the 70S ribosomal complex. The protein is Translation initiation factor IF-2 of Francisella tularensis subsp. holarctica (strain LVS).